The sequence spans 54 residues: uncharacterized protein (54 aa).

This is an uncharacterized protein from Rhizobium etli.